The sequence spans 325 residues: Glycerol-3-phosphate dehydrogenase [NAD(P)+] (325 aa).

The NADPH site is built by Ser14, Phe15, Arg35, and Lys109. Positions 109 and 137 each coordinate sn-glycerol 3-phosphate. Position 141 (Ala141) interacts with NADPH. Residues Lys192, Asp247, Ser257, Arg258, and Asn259 each coordinate sn-glycerol 3-phosphate. Catalysis depends on Lys192, which acts as the Proton acceptor. An NADPH-binding site is contributed by Arg258. NADPH is bound by residues Leu282 and Glu284.

Belongs to the NAD-dependent glycerol-3-phosphate dehydrogenase family.

The protein localises to the cytoplasm. It catalyses the reaction sn-glycerol 3-phosphate + NAD(+) = dihydroxyacetone phosphate + NADH + H(+). It carries out the reaction sn-glycerol 3-phosphate + NADP(+) = dihydroxyacetone phosphate + NADPH + H(+). It functions in the pathway membrane lipid metabolism; glycerophospholipid metabolism. Its function is as follows. Catalyzes the reduction of the glycolytic intermediate dihydroxyacetone phosphate (DHAP) to sn-glycerol 3-phosphate (G3P), the key precursor for phospholipid synthesis. This chain is Glycerol-3-phosphate dehydrogenase [NAD(P)+], found in Rickettsia africae (strain ESF-5).